The following is a 136-amino-acid chain: Galectin-7 (136 aa).

A Galectin domain is found at 6-136 (HKTPLPQGVR…DVQLHSVKIF (131 aa)). 70–76 (WGREERG) contacts a beta-D-galactoside.

In terms of assembly, monomer.

The protein resides in the cytoplasm. Its subcellular location is the nucleus. It localises to the secreted. Could be involved in cell-cell and/or cell-matrix interactions necessary for normal growth control. Pro-apoptotic protein that functions intracellularly upstream of JNK activation and cytochrome c release. This is Galectin-7 (Lgals7) from Rattus norvegicus (Rat).